Reading from the N-terminus, the 299-residue chain is 4-diphosphocytidyl-2-C-methyl-D-erythritol kinase (299 aa).

Lys-18 is an active-site residue. An ATP-binding site is contributed by 104–114 (PIASGIGGGSS). The active site involves Asp-146.

Belongs to the GHMP kinase family. IspE subfamily.

The enzyme catalyses 4-CDP-2-C-methyl-D-erythritol + ATP = 4-CDP-2-C-methyl-D-erythritol 2-phosphate + ADP + H(+). It functions in the pathway isoprenoid biosynthesis; isopentenyl diphosphate biosynthesis via DXP pathway; isopentenyl diphosphate from 1-deoxy-D-xylulose 5-phosphate: step 3/6. Catalyzes the phosphorylation of the position 2 hydroxy group of 4-diphosphocytidyl-2C-methyl-D-erythritol. The polypeptide is 4-diphosphocytidyl-2-C-methyl-D-erythritol kinase (Brucella melitensis biotype 1 (strain ATCC 23456 / CCUG 17765 / NCTC 10094 / 16M)).